The following is a 447-amino-acid chain: Omega-6 fatty acid desaturase, chloroplastic (447 aa).

Residues M1–A65 constitute a chloroplast transit peptide. Position 66 is an N-acetylvaline (V66). The short motif at H171 to H175 is the Histidine box-1 element. Positions H207–H211 match the Histidine box-2 motif. A Histidine box-3 motif is present at residues H367–H371.

It belongs to the fatty acid desaturase type 1 family.

The protein localises to the plastid. Its subcellular location is the chloroplast membrane. The enzyme catalyses a (9Z)-octadecenoyl-containing glycerolipid + 2 reduced [2Fe-2S]-[ferredoxin] + O2 + 2 H(+) = a (9Z,12Z)-octadecadienoyl-containing glycerolipid + 2 oxidized [2Fe-2S]-[ferredoxin] + 2 H2O. Its pathway is lipid metabolism; polyunsaturated fatty acid biosynthesis. Chloroplast omega-6 fatty acid desaturase introduces the second double bond in the biosynthesis of 16:3 and 18:3 fatty acids, important constituents of plant membranes. It is thought to use ferredoxin as an electron donor and to act on fatty acids esterified to galactolipids, sulfolipids and phosphatidylglycerol. This Spinacia oleracea (Spinach) protein is Omega-6 fatty acid desaturase, chloroplastic.